The primary structure comprises 163 residues: Deoxyuridine 5'-triphosphate nucleotidohydrolase (163 aa).

Substrate contacts are provided by residues 78–80 (RSG), asparagine 91, and 95–97 (TVD). Residues 140–151 (ERESLNETERGD) show a composition bias toward basic and acidic residues. A disordered region spans residues 140-163 (ERESLNETERGDGGFGHTGVNSQP).

The protein belongs to the dUTPase family. Mg(2+) serves as cofactor.

It carries out the reaction dUTP + H2O = dUMP + diphosphate + H(+). It participates in pyrimidine metabolism; dUMP biosynthesis; dUMP from dCTP (dUTP route): step 2/2. Its function is as follows. This enzyme is involved in nucleotide metabolism: it produces dUMP, the immediate precursor of thymidine nucleotides and it decreases the intracellular concentration of dUTP so that uracil cannot be incorporated into DNA. The protein is Deoxyuridine 5'-triphosphate nucleotidohydrolase of Heliobacterium modesticaldum (strain ATCC 51547 / Ice1).